Consider the following 47-residue polypeptide: Conotoxin reg3.11 (47 aa).

Residues 1 to 31 (DQPVERHAENKRHLIPAVMRAMTMNADRRVQ) constitute a propeptide that is removed on maturation. 3 disulfide bridges follow: cysteine 32-cysteine 44, cysteine 33-cysteine 42, and cysteine 38-cysteine 45. Residues 46–47 (YH) constitute a propeptide that is removed on maturation.

It belongs to the conotoxin M superfamily. As to expression, expressed by the venom duct.

The protein localises to the secreted. The protein is Conotoxin reg3.11 of Conus regius (Crown cone).